Here is a 118-residue protein sequence, read N- to C-terminus: Hydrogenase maturation factor HypA (118 aa).

His2 contacts Ni(2+). Zn(2+)-binding residues include Cys73, Cys76, Cys90, and Cys93.

It belongs to the HypA/HybF family.

Involved in the maturation of [NiFe] hydrogenases. Required for nickel insertion into the metal center of the hydrogenase. This Salmonella typhi protein is Hydrogenase maturation factor HypA.